We begin with the raw amino-acid sequence, 309 residues long: Ribosomal RNA small subunit methyltransferase H (309 aa).

S-adenosyl-L-methionine-binding positions include 33-35, D53, F79, D100, and Q107; that span reads GGH.

It belongs to the methyltransferase superfamily. RsmH family.

Its subcellular location is the cytoplasm. It carries out the reaction cytidine(1402) in 16S rRNA + S-adenosyl-L-methionine = N(4)-methylcytidine(1402) in 16S rRNA + S-adenosyl-L-homocysteine + H(+). In terms of biological role, specifically methylates the N4 position of cytidine in position 1402 (C1402) of 16S rRNA. This is Ribosomal RNA small subunit methyltransferase H from Clostridium botulinum (strain Loch Maree / Type A3).